The primary structure comprises 258 residues: Pimeloyl-[acyl-carrier protein] methyl ester esterase (258 aa).

Substrate is bound by residues tryptophan 22, 84–85 (SL), and 145–149 (FLAIQ). Serine 84 serves as the catalytic Nucleophile. Active-site residues include aspartate 209 and histidine 238. Histidine 238 serves as a coordination point for substrate.

It belongs to the AB hydrolase superfamily. Carboxylesterase BioH family. Monomer.

The protein localises to the cytoplasm. It catalyses the reaction 6-carboxyhexanoyl-[ACP] methyl ester + H2O = 6-carboxyhexanoyl-[ACP] + methanol + H(+). It functions in the pathway cofactor biosynthesis; biotin biosynthesis. In terms of biological role, the physiological role of BioH is to remove the methyl group introduced by BioC when the pimeloyl moiety is complete. It allows to synthesize pimeloyl-ACP via the fatty acid synthetic pathway through the hydrolysis of the ester bonds of pimeloyl-ACP esters. This is Pimeloyl-[acyl-carrier protein] methyl ester esterase from Pseudoalteromonas atlantica (strain T6c / ATCC BAA-1087).